Consider the following 1423-residue polypeptide: Serum albumin SDS-1 (1423 aa).

Positions 1 to 23 (MGKAMLKLCITLMVLVFSGTAES) are cleaved as a signal peptide. A propeptide spanning residues 24–29 (KGVMRR) is cleaved from the precursor. Albumin domains follow at residues 29-230 (REDE…EDFK), 231-426 (HKLT…EFKS), 427-608 (EVEK…SDFK), 609-811 (MDVE…SQAR), 812-1031 (QEAL…HTIH), 1032-1226 (MEIR…AIEK), and 1227-1422 (VIKD…AIKS). His-36 contributes to the Cu cation binding site. 16 cysteine pairs are disulfide-bonded: Cys-42–Cys-88, Cys-87–Cys-96, Cys-109–Cys-125, Cys-124–Cys-135, Cys-167–Cys-212, Cys-211–Cys-221, Cys-244–Cys-290, Cys-289–Cys-298, Cys-311–Cys-327, Cys-326–Cys-337, Cys-363–Cys-408, Cys-407–Cys-416, Cys-439–Cys-485, Cys-484–Cys-493, Cys-506–Cys-522, and Cys-521–Cys-532. N-linked (GlcNAc...) asparagine glycosylation is present at Asn-490. The N-linked (GlcNAc...) asparagine glycan is linked to Asn-541. Cystine bridges form between Cys-556–Cys-601, Cys-622–Cys-668, Cys-667–Cys-676, Cys-689–Cys-705, Cys-704–Cys-715, Cys-747–Cys-792, Cys-791–Cys-802, Cys-825–Cys-871, Cys-870–Cys-879, Cys-892–Cys-907, and Cys-906–Cys-947. Residue Asn-652 is glycosylated (N-linked (GlcNAc...) asparagine). N-linked (GlcNAc...) asparagine glycosylation is present at Asn-754. Asn-908 and Asn-911 each carry an N-linked (GlcNAc...) asparagine glycan. The disordered stretch occupies residues 910-936 (SNTSTTTSTTTSTTTSTTTSTTTSTTS). 7 tandem repeats follow at residues 913–916 (STTT), 917–920 (STTT), 921–924 (STTT), 925–928 (STTT), 929–932 (STTT), 933–935 (STT), and 936–939 (STTT). Residues 913 to 939 (STTTSTTTSTTTSTTTSTTTSTTSTTT) are 7 X 4 AA tandem repeats of S-T-T-T. Asn-954 carries N-linked (GlcNAc...) asparagine glycosylation. 8 cysteine pairs are disulfide-bonded: Cys-969/Cys-1014, Cys-1013/Cys-1022, Cys-1045/Cys-1091, Cys-1090/Cys-1099, Cys-1112/Cys-1128, Cys-1127/Cys-1138, Cys-1163/Cys-1208, and Cys-1207/Cys-1216. The N-linked (GlcNAc...) asparagine glycan is linked to Asn-1070. A glycan (N-linked (GlcNAc...) asparagine) is linked at Asn-1236. Intrachain disulfides connect Cys-1239-Cys-1285, Cys-1284-Cys-1291, Cys-1304-Cys-1320, Cys-1319-Cys-1330, Cys-1359-Cys-1404, and Cys-1403-Cys-1412.

It belongs to the ALB/AFP/VDB family. As to expression, plasma.

The protein localises to the secreted. Functionally, serum albumin, the main protein of plasma, has a good binding capacity for water, Ca(2+), Na(+), K(+), fatty acids, hormones, bilirubin and drugs. Its main function is the regulation of the colloidal osmotic pressure of blood. The protein is Serum albumin SDS-1 (SDS-1) of Petromyzon marinus (Sea lamprey).